Consider the following 204-residue polypeptide: NADH-quinone oxidoreductase subunit C (204 aa).

The protein belongs to the complex I 30 kDa subunit family. As to quaternary structure, NDH-1 is composed of 14 different subunits. Subunits NuoB, C, D, E, F, and G constitute the peripheral sector of the complex.

It is found in the cell inner membrane. The enzyme catalyses a quinone + NADH + 5 H(+)(in) = a quinol + NAD(+) + 4 H(+)(out). Functionally, NDH-1 shuttles electrons from NADH, via FMN and iron-sulfur (Fe-S) centers, to quinones in the respiratory chain. The immediate electron acceptor for the enzyme in this species is believed to be ubiquinone. Couples the redox reaction to proton translocation (for every two electrons transferred, four hydrogen ions are translocated across the cytoplasmic membrane), and thus conserves the redox energy in a proton gradient. In Rhodopseudomonas palustris (strain ATCC BAA-98 / CGA009), this protein is NADH-quinone oxidoreductase subunit C.